We begin with the raw amino-acid sequence, 479 residues long: F-box/LRR-repeat protein 16 (479 aa).

The interval 1 to 92 (MSSPGIDGDP…GPVSGPPVER (92 aa)) is disordered. Over residues 47–60 (CQPPPPPTLPPPSL) the composition is skewed to pro residues. Arginine 92 carries the omega-N-methylarginine modification. In terms of domain architecture, F-box spans 94-139 (PLATDEKILNGLFWYFSACEKCILAQVCKAWRRVLYQPKFWAGLTP). LRR repeat units lie at residues 321 to 342 (NLTS…ELVA), 347 to 369 (KLRS…YVAC), 373 to 394 (RLEE…SYLS), 398 to 419 (SLRS…KHLL), 423 to 444 (NLRL…SGLV), and 446 to 470 (LQEL…YFSQ).

As to quaternary structure, interacts with SKP1 and CUL1.

Its function is as follows. Substrate-recognition component of the SCF (SKP1-CUL1-F-box protein)-type E3 ubiquitin ligase complex. This Mus musculus (Mouse) protein is F-box/LRR-repeat protein 16 (Fbxl16).